The following is a 631-amino-acid chain: PTS system beta-glucoside-specific EIIBCA component (631 aa).

The 86-residue stretch at 1–86 (MNYETLASEI…LSLDGMARFS (86 aa)) folds into the PTS EIIB type-1 domain. Catalysis depends on Cys-26, which acts as the Phosphocysteine intermediate; for EIIB activity. Positions 105–466 (DIISSIFTPF…DETQPAAADS (362 aa)) constitute a PTS EIIC type-1 domain. 10 helical membrane-spanning segments follow: residues 120–140 (ATGI…ISES), 146–166 (LLFA…GYTA), 175–195 (FTTL…AFNA), 206–226 (FLGI…ILFA), 248–268 (FFTP…LIGP), 295–315 (VMGA…FVPL), 328–348 (LLPL…GVLL), 358–378 (IAGS…VYGV), 385–405 (PFIF…YAHT), and 434–454 (AVIG…SFGV). A PTS EIIA type-1 domain is found at 501 to 605 (DRTFASGVMG…DLTTPIVITN (105 aa)). His-553 acts as the Tele-phosphohistidine intermediate; for EIIA activity in catalysis.

It localises to the cell inner membrane. Its function is as follows. The phosphoenolpyruvate-dependent sugar phosphotransferase system (sugar PTS), a major carbohydrate active -transport system, catalyzes the phosphorylation of incoming sugar substrates concomitantly with their translocation across the cell membrane. This system is involved in beta-glucoside transport. In terms of biological role, acts both as a kinase and as a phosphatase on ArbG. The sequence is that of PTS system beta-glucoside-specific EIIBCA component (arbF) from Dickeya chrysanthemi (Pectobacterium chrysanthemi).